The primary structure comprises 359 residues: Quinolinate synthase (359 aa).

Iminosuccinate contacts are provided by His-81 and Ser-99. Cys-144 is a [4Fe-4S] cluster binding site. Residues 170 to 172 (YVN) and Ser-187 contribute to the iminosuccinate site. [4Fe-4S] cluster is bound at residue Cys-229. Iminosuccinate contacts are provided by residues 255–257 (HPE) and Thr-272. Cys-315 serves as a coordination point for [4Fe-4S] cluster.

The protein belongs to the quinolinate synthase family. Type 2 subfamily. [4Fe-4S] cluster serves as cofactor.

Its subcellular location is the cytoplasm. It carries out the reaction iminosuccinate + dihydroxyacetone phosphate = quinolinate + phosphate + 2 H2O + H(+). It functions in the pathway cofactor biosynthesis; NAD(+) biosynthesis; quinolinate from iminoaspartate: step 1/1. Catalyzes the condensation of iminoaspartate with dihydroxyacetone phosphate to form quinolinate. The protein is Quinolinate synthase of Sinorhizobium medicae (strain WSM419) (Ensifer medicae).